The following is a 197-amino-acid chain: ADP-ribosylation factor 1 (197 aa).

Glycine 2 carries the N-myristoyl glycine lipid modification. Residues 24–31 (GLDAAGKT), 67–71 (DVGGQ), and 126–129 (NKQD) contribute to the GTP site.

Belongs to the small GTPase superfamily. Arf family.

The protein localises to the golgi apparatus. It catalyses the reaction GTP + H2O = GDP + phosphate + H(+). Its function is as follows. GTP-binding protein involved in protein trafficking; may modulate vesicle budding and uncoating within the Golgi apparatus. In Solanum tuberosum (Potato), this protein is ADP-ribosylation factor 1.